The primary structure comprises 969 residues: Defective in germ line development protein 3 (969 aa).

The gld-2-binding stretch occupies residues 34–81 (MAENAASARKLFVSSALKDIIVNPENFYHDFQQSAQMAEDANQRRQVS). 5 consecutive KH domains span residues 34–109 (MAEN…MIEI), 113–187 (RVTL…MRRN), 189–259 (HFTV…NEIL), 270–342 (FTLH…IMDL), and 344–419 (PISM…YQKV). Positions 57–471 (PENFYHDFQQ…GSNGRRHRSS (415 aa)) are gls-1-binding. Disordered regions lie at residues 459–508 (LSDG…SFSE) and 602–711 (EQHR…GDIH). Residues 487-508 (KQFSESSGGPSRSHTRVSSFSE) show a composition bias toward polar residues. A compositionally biased stretch (low complexity) spans 631–644 (PSSSTGSYYPSTTP). Basic and acidic residues predominate over residues 647-659 (RVYEQVREDDLRS). The span at 664-676 (RRTSVNGDDQNVE) shows a compositional bias: polar residues. Composition is skewed to basic and acidic residues over residues 677–687 (SMHDQGYERQY) and 694–711 (LQKD…GDIH). A gls-1-binding region spans residues 769–969 (LYMHESPHND…DLSLDETSTY (201 aa)). The interval 860–949 (NGVTKTILEP…VLNEKEKEIA (90 aa)) is fbf-1-binding. Positions 950–969 (DKSIESTVTQDLSLDETSTY) are disordered. Over residues 954–969 (ESTVTQDLSLDETSTY) the composition is skewed to polar residues.

In terms of assembly, interacts (via its KH1 domain) with gld-2. Isoform A but not isoform B interacts specifically with fbf-1 and fbf-2 in an RNA-independent manner. Isoform A interacts with gls-1 isoform C. Expressed in the germline (at protein level). In adult hermaphrodites, first detected in the transition zone (TZ), weakly expressed in the early mitotic region and in pachytene germ cells, and becomes more abundantly expressed as germ cells enter diakinesis (at protein level). Expressed in primary spermatocytes, but not in secondary spermatocytes or adult sperm (at protein level).

The protein resides in the cytoplasm. It localises to the cytoplasmic granule. The protein localises to the perinuclear region. Required maternally for germline survival and embryogenesis. Forms a complex with gls-1 which promotes the oogenic cell fate by freeing the translational repressor fbf to repress sperm promoting factors. Promotes maturation of primary spermatocytes to mature sperm. Required during hermaphrodite development to promote sperm fate, which is critical for determining the normal number of sperm. Promotion of sperm fate is at the expense of oogenesis, possibly through the negative regulation of fbf. Required during male development for the continued production of sperm and inhibition of oogenesis. Together with gld-2, promotes the transition from mitosis to meiosis. Required for polyadenylation of neg-1 mRNA during embryogenesis. This chain is Defective in germ line development protein 3, found in Caenorhabditis elegans.